The sequence spans 360 residues: Phospho-N-acetylmuramoyl-pentapeptide-transferase (360 aa).

Helical transmembrane passes span 27–47 (IVGL…LIAW), 71–91 (TPTM…LLWA), 97–117 (YVWC…IDDY), 132–152 (WKYF…YAIG), 168–188 (VMPQ…VGTS), 199–219 (GLAI…AWAT), 236–256 (AGEL…FLWF), 263–283 (VFMG…IAVL), 288–308 (FLLV…ILQV), and 338–358 (VIVR…ATLK).

The protein belongs to the glycosyltransferase 4 family. MraY subfamily. Mg(2+) serves as cofactor.

Its subcellular location is the cell inner membrane. It catalyses the reaction UDP-N-acetyl-alpha-D-muramoyl-L-alanyl-gamma-D-glutamyl-meso-2,6-diaminopimeloyl-D-alanyl-D-alanine + di-trans,octa-cis-undecaprenyl phosphate = di-trans,octa-cis-undecaprenyl diphospho-N-acetyl-alpha-D-muramoyl-L-alanyl-D-glutamyl-meso-2,6-diaminopimeloyl-D-alanyl-D-alanine + UMP. It participates in cell wall biogenesis; peptidoglycan biosynthesis. Functionally, catalyzes the initial step of the lipid cycle reactions in the biosynthesis of the cell wall peptidoglycan: transfers peptidoglycan precursor phospho-MurNAc-pentapeptide from UDP-MurNAc-pentapeptide onto the lipid carrier undecaprenyl phosphate, yielding undecaprenyl-pyrophosphoryl-MurNAc-pentapeptide, known as lipid I. The protein is Phospho-N-acetylmuramoyl-pentapeptide-transferase of Proteus mirabilis (strain HI4320).